Reading from the N-terminus, the 694-residue chain is Transcriptional activator HAA1 (694 aa).

The copper-fist DNA-binding region spans 1-40; the sequence is MVLINGIKYACERCIRGHRVTTCNHTDQPLMMIKPKGRPS. The Zn(2+) site is built by cysteine 11, cysteine 14, cysteine 23, and histidine 25. 2 disordered regions span residues 104–128 and 209–240; these read QKRH…SQPM and FNFL…DSSV. Positions 111 to 126 are enriched in polar residues; it reads SPSSSQKKGRSISRSQ. A phosphoserine mark is found at serine 125, serine 231, serine 241, and serine 291. 4 disordered regions span residues 332-388, 479-514, 566-588, and 650-677; these read FDIN…NGLF, EKER…HRYP, SSIH…SRQD, and MIST…PPSQ. Positions 336–349 are enriched in polar residues; the sequence is DNCNRINSKSYSKT. A compositionally biased stretch (low complexity) spans 350-378; sequence NSMNGNGMNNSNNNNINSNGNDKNNNNSS. Polar residues-rich tracts occupy residues 566–577 and 664–677; these read SSIHSVPQSINS and SPMS…PPSQ.

It localises to the nucleus. Regulates the transcription of a set of genes, many of which encode membrane proteins. Among the genes regulated are YGR138C and YRO2. Does not seem to be dependent on copper. The protein is Transcriptional activator HAA1 (HAA1) of Saccharomyces cerevisiae (strain ATCC 204508 / S288c) (Baker's yeast).